The sequence spans 216 residues: Splicing factor U2AF 23 kDa subunit (216 aa).

Residues 12–40 (EQDKVNCSFYYKIGACRHGERCSRKHVKP) form a C3H1-type 1 zinc finger. One can recognise an RRM domain in the interval 44–141 (QTILCPNMYK…RPVYAELSPV (98 aa)). A C3H1-type 2 zinc finger spans residues 143-170 (DFREACCRQHETSECQRGGLCNFMHAKK). Residues 194 to 216 (EMKKEPNSDSTNRWVSVTAERKN) are disordered.

Forms a heterodimer with the U2AF large subunit. Can also form a homodimer. U2AF large subunit (U2AF59), U2AF small subunit (U2AF23) and SF1 (bpb1) interact to form a complex required for complex A formation. Interacts with cwf13.

The protein resides in the nucleus. Its function is as follows. Necessary for the splicing of pre-mRNA. The SF1-U2AF59-U2AF23 complex has a role in the recognition of the branch site (5'-UACUAAC-3'), the pyrimidine tract and the 3'-splice site at the 3'-end of introns. The protein is Splicing factor U2AF 23 kDa subunit of Schizosaccharomyces pombe (strain 972 / ATCC 24843) (Fission yeast).